The chain runs to 231 residues: 5'-methylthioadenosine/S-adenosylhomocysteine nucleosidase (231 aa).

Catalysis depends on glutamate 12, which acts as the Proton acceptor. Substrate contacts are provided by residues glycine 78, isoleucine 153, and 174–175; that span reads ME. Aspartate 198 (proton donor) is an active-site residue.

This sequence belongs to the PNP/UDP phosphorylase family. MtnN subfamily.

The enzyme catalyses S-adenosyl-L-homocysteine + H2O = S-(5-deoxy-D-ribos-5-yl)-L-homocysteine + adenine. It carries out the reaction S-methyl-5'-thioadenosine + H2O = 5-(methylsulfanyl)-D-ribose + adenine. It catalyses the reaction 5'-deoxyadenosine + H2O = 5-deoxy-D-ribose + adenine. Its pathway is amino-acid biosynthesis; L-methionine biosynthesis via salvage pathway; S-methyl-5-thio-alpha-D-ribose 1-phosphate from S-methyl-5'-thioadenosine (hydrolase route): step 1/2. Its function is as follows. Catalyzes the irreversible cleavage of the glycosidic bond in both 5'-methylthioadenosine (MTA) and S-adenosylhomocysteine (SAH/AdoHcy) to adenine and the corresponding thioribose, 5'-methylthioribose and S-ribosylhomocysteine, respectively. Also cleaves 5'-deoxyadenosine, a toxic by-product of radical S-adenosylmethionine (SAM) enzymes, into 5-deoxyribose and adenine. The chain is 5'-methylthioadenosine/S-adenosylhomocysteine nucleosidase from Shewanella putrefaciens (strain CN-32 / ATCC BAA-453).